The primary structure comprises 405 residues: MAVGLGPLSTLHPVPGFELGIASAGIKRPGRKDVVVMRCAEGSSVAGVFTLNAFCAAPVTLAKQRFLGEVRYLLTNTGNANAGTGEAGLAAAAQTCAKLAELAGVAETSVLPYSTGVIGEPLPVAKIEAALPAALADLAEDRWAEAAAGIMTTDTLPKGASRQFVHDGVTVTVTGISKGAGMIKPNMATMLGYIATDAKVAQGVLQDLLRDAANKSFNRITIDGDTSTNDCCMLIATGRAALPEVTQASGALFAALKQAVLEVSMELAQAIVRDGEGATKFVTVQVNGGATHQECLDVGYAVAHSPLIKTALFASDPNWGRILAAVGRAGVANLDVSKIDVFLGDVCIASRGGRAASYTEEQGAAVMAQAEIGIRIELGRGTCSETIWTTDLSHEYVKINAEYRT.

Substrate-binding residues include Thr152, Lys178, Thr189, Glu276, Asn400, and Thr405. Thr189 acts as the Nucleophile in catalysis.

This sequence belongs to the ArgJ family. Heterotetramer of two alpha and two beta chains.

Its subcellular location is the cytoplasm. It carries out the reaction N(2)-acetyl-L-ornithine + L-glutamate = N-acetyl-L-glutamate + L-ornithine. It catalyses the reaction L-glutamate + acetyl-CoA = N-acetyl-L-glutamate + CoA + H(+). It functions in the pathway amino-acid biosynthesis; L-arginine biosynthesis; L-ornithine and N-acetyl-L-glutamate from L-glutamate and N(2)-acetyl-L-ornithine (cyclic): step 1/1. Its pathway is amino-acid biosynthesis; L-arginine biosynthesis; N(2)-acetyl-L-ornithine from L-glutamate: step 1/4. Catalyzes two activities which are involved in the cyclic version of arginine biosynthesis: the synthesis of N-acetylglutamate from glutamate and acetyl-CoA as the acetyl donor, and of ornithine by transacetylation between N(2)-acetylornithine and glutamate. The polypeptide is Arginine biosynthesis bifunctional protein ArgJ (Pseudomonas aeruginosa (strain ATCC 15692 / DSM 22644 / CIP 104116 / JCM 14847 / LMG 12228 / 1C / PRS 101 / PAO1)).